The chain runs to 212 residues: MNYPHPIIAREGWPFIAIAAVVALLIHFVAGFGIAWIFWLLLIFVVQFFRDPARPIPTQANAVLCPADGRIVAVETAHDPYANREALKISVFMNVFNVHSQRSPVDGAISKVEYFPGAYLNAAVDKASTENERNAIVIETASGATVTSVQIAGLIARRILCYVRAGEPLTRGQRYGFIRFGSRVDVYLPVGSRPRVSIGEKVSASSTILAEL.

Ser182 serves as the catalytic Schiff-base intermediate with substrate; via pyruvic acid. A Pyruvic acid (Ser); by autocatalysis modification is found at Ser182.

The protein belongs to the phosphatidylserine decarboxylase family. PSD-A subfamily. Heterodimer of a large membrane-associated beta subunit and a small pyruvoyl-containing alpha subunit. Pyruvate is required as a cofactor. Is synthesized initially as an inactive proenzyme. Formation of the active enzyme involves a self-maturation process in which the active site pyruvoyl group is generated from an internal serine residue via an autocatalytic post-translational modification. Two non-identical subunits are generated from the proenzyme in this reaction, and the pyruvate is formed at the N-terminus of the alpha chain, which is derived from the carboxyl end of the proenzyme. The post-translation cleavage follows an unusual pathway, termed non-hydrolytic serinolysis, in which the side chain hydroxyl group of the serine supplies its oxygen atom to form the C-terminus of the beta chain, while the remainder of the serine residue undergoes an oxidative deamination to produce ammonia and the pyruvoyl prosthetic group on the alpha chain.

The protein localises to the cell membrane. It catalyses the reaction a 1,2-diacyl-sn-glycero-3-phospho-L-serine + H(+) = a 1,2-diacyl-sn-glycero-3-phosphoethanolamine + CO2. It functions in the pathway phospholipid metabolism; phosphatidylethanolamine biosynthesis; phosphatidylethanolamine from CDP-diacylglycerol: step 2/2. Functionally, catalyzes the formation of phosphatidylethanolamine (PtdEtn) from phosphatidylserine (PtdSer). The polypeptide is Phosphatidylserine decarboxylase proenzyme (Paraburkholderia phymatum (strain DSM 17167 / CIP 108236 / LMG 21445 / STM815) (Burkholderia phymatum)).